The chain runs to 145 residues: MPKISLIGKDLAKEGIEFVFAGPLPTCSDCRVKNVCFNLEQGHKYRVTKVREQLNPCIIFNGDKVNTVEVEELEDFFIIQESKKLQEGAIVTMKSMNCDYITCPNIEKCNLYYQKNDLKVAIKSIGQNVNCPKGFKMKKVQVTYK.

This sequence belongs to the UPF0179 family.

The polypeptide is UPF0179 protein TV1250 (Thermoplasma volcanium (strain ATCC 51530 / DSM 4299 / JCM 9571 / NBRC 15438 / GSS1)).